Reading from the N-terminus, the 89-residue chain is Bombyxin B-1 (89 aa).

The N-terminal stretch at M1 to G19 is a signal peptide. Intrachain disulfides connect C29–C75, C41–C88, and C74–C79. Positions G48–G66 are cleaved as a propeptide — c peptide like.

Belongs to the insulin family. Heterodimer of a B chain and an A chain linked by two disulfide bonds.

It is found in the secreted. Its function is as follows. Brain peptide responsible for activation of prothoracic glands to produce ecdysone in insects. The sequence is that of Bombyxin B-1 (BBXB1) from Bombyx mori (Silk moth).